A 602-amino-acid chain; its full sequence is Cholinesterase (602 aa).

A signal peptide spans 1 to 28 (MHSKVTIICIRFLFWFLLLCMLIGKSHT). N-linked (GlcNAc...) (complex) asparagine glycosylation is found at Asn-45 and Asn-85. Cys-93 and Cys-120 are oxidised to a cystine. Trp-110 is a tacrine binding site. Asn-134 carries N-linked (GlcNAc...) (complex) asparagine glycosylation. 144–145 (GG) lines the substrate pocket. The active-site Acyl-ester intermediate is Ser-226. Position 226 is a phosphoserine (Ser-226). N-linked (GlcNAc...) (complex) asparagine glycosylation is found at Asn-269 and Asn-284. Cys-280 and Cys-291 are disulfide-bonded. Glu-353 serves as the catalytic Charge relay system. Residue Asn-369 is glycosylated (N-linked (GlcNAc...) (complex) asparagine). Residues Cys-428 and Cys-547 are joined by a disulfide bond. His-466 provides a ligand contact to tacrine. His-466 acts as the Charge relay system in catalysis. Residue Asn-483 is glycosylated (N-linked (GlcNAc...) (complex) asparagine). N-linked (GlcNAc...) asparagine glycosylation is found at Asn-509, Asn-513, and Asn-514.

This sequence belongs to the type-B carboxylesterase/lipase family. As to quaternary structure, homotetramer; disulfide-linked. Dimer of dimers. Post-translationally, N-glycosylated. No other PTM detected. The major N-glycan structures are of the complex diantennary type with 1 and 2 N-acetylneuraminic acid molecules (Neu5Ac) making up approximately 33% and 47% of the total N-glycans, respectively. Only low amounts of fucosylated diantennary N-glycans are detected (approximately 2%). Triantennary N-glycans with or without fucose amount to approximately 13%, whereas 5% of the total N-glycans are of the oligomannosidic or hybrid type. Detected in blood plasma (at protein level). Present in most cells except erythrocytes.

It localises to the secreted. It carries out the reaction an acylcholine + H2O = a carboxylate + choline + H(+). With respect to regulation, inhibited by mercury. Inhibited by Tabun. Tabun forms a covalent adduct with Ser-226 that becomes irreversible upon aging. Its function is as follows. Esterase with broad substrate specificity. Contributes to the inactivation of the neurotransmitter acetylcholine. Can degrade neurotoxic organophosphate esters. This is Cholinesterase (BCHE) from Homo sapiens (Human).